A 388-amino-acid chain; its full sequence is Basigin (388 aa).

An N-terminal signal peptide occupies residues 1-22 (MAAALLLALAFTFLSGQGACAA). The Extracellular segment spans residues 23-326 (AGFLKAPMSQ…ISLRVRSRLA (304 aa)). Positions 37–120 (GGSVVLHCEA…SSDPDRNHLT (84 aa)) constitute an Ig-like domain. 3 disulfide bridges follow: C44–C108, C157–C203, and C242–C304. Positions 138 to 219 (EPGTIVTSVQ…VGRGNINVEG (82 aa)) constitute an Ig-like C2-type domain. N160, N269, and N305 each carry an N-linked (GlcNAc...) asparagine glycan. Positions 221-320 (PRIKVGKKSE…GSARETISLR (100 aa)) constitute an Ig-like V-type domain. The chain crosses the membrane as a helical span at residues 327–347 (ALWPFLGIVAEVLVLVTIIFI). Residues 348-388 (YEKRRKPDQTLDEDDPGAAPLKGSGSHLNDKDKNVRQRNAT) lie on the Cytoplasmic side of the membrane. The interval 355-388 (DQTLDEDDPGAAPLKGSGSHLNDKDKNVRQRNAT) is disordered. T357 carries the post-translational modification Phosphothreonine. At S371 the chain carries Phosphoserine.

As to quaternary structure, homooligomer. Interacts with NXNL1, SLC2A1 and SLC16A1/GLUT1. Interacts with XKR8; promoting its localization at the cell membrane. In terms of assembly, homooligomer. Interacts with SLC16A1; interaction mediates SLC16A1 targeting to the plasma membrane. Interacts with SLC16A3; interaction mediates SLC16A3 targeting to the plasma membrane. Interacts with VEGFA, KDR/VEGFR2, PPIA/CYPA, SLC16A12, SLC16A11, ATP1B2, MAG, L1CAM and AJAP1. Interacts with PPIL2; regulates BSG transport to the cell membrane. Interacts with SLC16A6; this interaction mediates targeting to the plasma membrane. Expressed in the skeletal muscle, liver, small intestine, kidney, testis, brain, heart and spleen. Also present in various immature cells and endothelia.

It localises to the cell membrane. It is found in the photoreceptor inner segment. The protein resides in the cell projection. The protein localises to the cilium. Its subcellular location is the photoreceptor outer segment. It localises to the endoplasmic reticulum membrane. It is found in the basolateral cell membrane. Functionally, essential for normal retinal maturation and development. Acts as a retinal cell surface receptor for NXNL1 and plays an important role in NXNL1-mediated survival of retinal cone photoreceptors. In association with glucose transporter SLC16A1/GLUT1 and NXNL1, promotes retinal cone survival by enhancing aerobic glycolysis and accelerating the entry of glucose into photoreceptors. Its function is as follows. Signaling receptor for cyclophilins, essential for PPIA/CYPA and PPIB/CYPB-dependent signaling related to chemotaxis and adhesion of immune cells. Plays an important role in targeting the monocarboxylate transporters SLC16A1/GLUT1 and SLC16A3 to the plasma membrane. Acts as a coreceptor for vascular endothelial growth factor receptor 2 (KDR/VEGFR2) in endothelial cells enhancing its VEGFA-mediated activation and downstream signaling. Promotes angiogenesis through EPAS1/HIF2A-mediated up-regulation of VEGFA and KDR/VEGFR2 in endothelial cells. Plays an important role in spermatogenesis; mediates interactions between germ cells and Sertoli cell and is essential for the development/differentiation of germ cells to round spermatids. The protein is Basigin (Bsg) of Rattus norvegicus (Rat).